The chain runs to 100 residues: Flagellar transcriptional regulator FlhD (100 aa).

This sequence belongs to the FlhD family. In terms of assembly, homodimer; disulfide-linked. Forms a heterohexamer composed of two FlhC and four FlhD subunits. Each FlhC binds a FlhD dimer, forming a heterotrimer, and a hexamer assembles by dimerization of two heterotrimers.

It is found in the cytoplasm. Functions in complex with FlhC as a master transcriptional regulator that regulates transcription of several flagellar and non-flagellar operons by binding to their promoter region. Activates expression of class 2 flagellar genes, including fliA, which is a flagellum-specific sigma factor that turns on the class 3 genes. Also regulates genes whose products function in a variety of physiological pathways. The chain is Flagellar transcriptional regulator FlhD from Ralstonia pickettii (strain 12D).